Here is a 79-residue protein sequence, read N- to C-terminus: Small ribosomal subunit protein bS16c (79 aa).

Belongs to the bacterial ribosomal protein bS16 family.

The protein localises to the plastid. Its subcellular location is the chloroplast. The polypeptide is Small ribosomal subunit protein bS16c (Staurastrum punctulatum (Green alga)).